Reading from the N-terminus, the 364-residue chain is UDP-N-acetylglucosamine--N-acetylmuramyl-(pentapeptide) pyrophosphoryl-undecaprenol N-acetylglucosamine transferase (364 aa).

UDP-N-acetyl-alpha-D-glucosamine-binding positions include 10 to 12 (TGG), Asn124, Arg166, Ser196, Ile252, and Gln297.

This sequence belongs to the glycosyltransferase 28 family. MurG subfamily.

The protein resides in the cell membrane. The enzyme catalyses di-trans,octa-cis-undecaprenyl diphospho-N-acetyl-alpha-D-muramoyl-L-alanyl-D-glutamyl-meso-2,6-diaminopimeloyl-D-alanyl-D-alanine + UDP-N-acetyl-alpha-D-glucosamine = di-trans,octa-cis-undecaprenyl diphospho-[N-acetyl-alpha-D-glucosaminyl-(1-&gt;4)]-N-acetyl-alpha-D-muramoyl-L-alanyl-D-glutamyl-meso-2,6-diaminopimeloyl-D-alanyl-D-alanine + UDP + H(+). It participates in cell wall biogenesis; peptidoglycan biosynthesis. Its function is as follows. Cell wall formation. Catalyzes the transfer of a GlcNAc subunit on undecaprenyl-pyrophosphoryl-MurNAc-pentapeptide (lipid intermediate I) to form undecaprenyl-pyrophosphoryl-MurNAc-(pentapeptide)GlcNAc (lipid intermediate II). This Ruminiclostridium cellulolyticum (strain ATCC 35319 / DSM 5812 / JCM 6584 / H10) (Clostridium cellulolyticum) protein is UDP-N-acetylglucosamine--N-acetylmuramyl-(pentapeptide) pyrophosphoryl-undecaprenol N-acetylglucosamine transferase.